The following is a 464-amino-acid chain: Argininosuccinate lyase (464 aa).

Belongs to the lyase 1 family. Argininosuccinate lyase subfamily.

It localises to the cytoplasm. The enzyme catalyses 2-(N(omega)-L-arginino)succinate = fumarate + L-arginine. The protein operates within amino-acid biosynthesis; L-arginine biosynthesis; L-arginine from L-ornithine and carbamoyl phosphate: step 3/3. This chain is Argininosuccinate lyase, found in Pseudomonas syringae pv. tomato (strain ATCC BAA-871 / DC3000).